A 400-amino-acid chain; its full sequence is Nicotinate phosphoribosyltransferase (400 aa).

Phosphohistidine; by autocatalysis is present on His220.

This sequence belongs to the NAPRTase family. Post-translationally, transiently phosphorylated on a His residue during the reaction cycle. Phosphorylation strongly increases the affinity for substrates and increases the rate of nicotinate D-ribonucleotide production. Dephosphorylation regenerates the low-affinity form of the enzyme, leading to product release.

The catalysed reaction is nicotinate + 5-phospho-alpha-D-ribose 1-diphosphate + ATP + H2O = nicotinate beta-D-ribonucleotide + ADP + phosphate + diphosphate. Its pathway is cofactor biosynthesis; NAD(+) biosynthesis; nicotinate D-ribonucleotide from nicotinate: step 1/1. Functionally, catalyzes the synthesis of beta-nicotinate D-ribonucleotide from nicotinate and 5-phospho-D-ribose 1-phosphate at the expense of ATP. The protein is Nicotinate phosphoribosyltransferase of Escherichia coli O7:K1 (strain IAI39 / ExPEC).